A 378-amino-acid polypeptide reads, in one-letter code: Apoptosis-inducing factor 1 (378 aa).

Residues 7–25 (NIVVVGAGVFGVSVANHLY) traverse the membrane as a helical segment. FAD is bound by residues 12 to 16 (GAGVF), arginine 51, lysine 56, and aspartate 283.

It belongs to the FAD-dependent oxidoreductase family. FAD is required as a cofactor.

Its subcellular location is the mitochondrion outer membrane. It is found in the nucleus. In terms of biological role, putative FAD-dependent oxidoreductase involved in the resistance to cercosporin and other singlet oxygen-generating photosensitizers. Translocates from mitochondria to the nucleus under apoptotic conditions, where it degrades DNA and induces apoptosis. The sequence is that of Apoptosis-inducing factor 1 (AIF1) from Saccharomyces cerevisiae (strain ATCC 204508 / S288c) (Baker's yeast).